The following is an 81-amino-acid chain: Cytotoxin 3a (81 aa).

The N-terminal stretch at 1–21 is a signal peptide; that stretch reads MKTLLLTLVVVTIVCLDLGYT. Cystine bridges form between Cys-24-Cys-42, Cys-35-Cys-59, Cys-63-Cys-74, and Cys-75-Cys-80.

The protein belongs to the three-finger toxin family. Short-chain subfamily. Type IA cytotoxin sub-subfamily. In terms of assembly, monomer in solution; Homodimer and oligomer in the presence of negatively charged lipids forming a pore with a size ranging between 20 and 30 Angstroms. In terms of tissue distribution, expressed by the venom gland.

It is found in the secreted. It localises to the target cell membrane. In terms of biological role, shows cytolytic activity on many different cells by forming pore in lipid membranes. In vivo, increases heart rate or kills the animal by cardiac arrest. In addition, it binds to heparin with high affinity, interacts with Kv channel-interacting protein 1 (KCNIP1) in a calcium-independent manner, and binds to integrin alpha-V/beta-3 (ITGAV/ITGB3) with moderate affinity. This is Cytotoxin 3a from Naja atra (Chinese cobra).